Reading from the N-terminus, the 467-residue chain is Asparagine--tRNA ligase (467 aa).

Belongs to the class-II aminoacyl-tRNA synthetase family. In terms of assembly, homodimer.

It is found in the cytoplasm. The catalysed reaction is tRNA(Asn) + L-asparagine + ATP = L-asparaginyl-tRNA(Asn) + AMP + diphosphate + H(+). This chain is Asparagine--tRNA ligase, found in Bacteroides fragilis (strain ATCC 25285 / DSM 2151 / CCUG 4856 / JCM 11019 / LMG 10263 / NCTC 9343 / Onslow / VPI 2553 / EN-2).